The following is a 488-amino-acid chain: DELTA-alicitoxin-Pse2b (488 aa).

A signal peptide spans 1–21 (MSKPIIFLLTAFVVLTDLGAT). Residues 24-344 (TEKVEVKAKP…GYLNFDCAYE (321 aa)) enclose the MACPF domain. One can recognise an EGF-like domain in the interval 369-398 (VCKLGPEGCHSDDDCESDDLIYCACCGDSC). Intrachain disulfides connect cysteine 370/cysteine 383, cysteine 377/cysteine 391, and cysteine 393/cysteine 398.

The protein resides in the secreted. It localises to the nematocyst. Its function is as follows. Causes lethal toxicity to the shrimp Palaemon paucidence, and hemolytic activity toward sheep red blood cells. In Phyllodiscus semoni (Night anemone), this protein is DELTA-alicitoxin-Pse2b.